Consider the following 259-residue polypeptide: Hydroxyacylglutathione hydrolase (259 aa).

Zn(2+)-binding residues include H56, H58, D60, H61, H112, D133, and H171.

The protein belongs to the metallo-beta-lactamase superfamily. Glyoxalase II family. In terms of assembly, monomer. Zn(2+) is required as a cofactor.

The enzyme catalyses an S-(2-hydroxyacyl)glutathione + H2O = a 2-hydroxy carboxylate + glutathione + H(+). The protein operates within secondary metabolite metabolism; methylglyoxal degradation; (R)-lactate from methylglyoxal: step 2/2. Functionally, thiolesterase that catalyzes the hydrolysis of S-D-lactoyl-glutathione to form glutathione and D-lactic acid. In Pseudomonas putida (strain ATCC 700007 / DSM 6899 / JCM 31910 / BCRC 17059 / LMG 24140 / F1), this protein is Hydroxyacylglutathione hydrolase.